Consider the following 252-residue polypeptide: uncharacterized protein (252 aa).

Composition is skewed to polar residues over residues 108–122 (RTTMRQGRFPSSSSE) and 136–153 (MPNTGASSSQDPFTNSQS). A disordered region spans residues 108–252 (RTTMRQGRFP…LIWNDSSSSK (145 aa)). Residues 154-172 (TEKEDAMYSKDNGFEDRSK) show a composition bias toward basic and acidic residues. Over residues 201-226 (VKSTDSAFSGQENSEAFPSRTSNLGS) the composition is skewed to polar residues.

The protein resides in the cytoplasm. It is found in the mitochondrion. It localises to the nucleus. This is an uncharacterized protein from Schizosaccharomyces pombe (strain 972 / ATCC 24843) (Fission yeast).